Consider the following 387-residue polypeptide: Large ribosomal subunit protein uL3 (387 aa).

It belongs to the universal ribosomal protein uL3 family.

Its subcellular location is the cytoplasm. The protein is Large ribosomal subunit protein uL3 (RPL3) of Candida glabrata (strain ATCC 2001 / BCRC 20586 / JCM 3761 / NBRC 0622 / NRRL Y-65 / CBS 138) (Yeast).